A 788-amino-acid chain; its full sequence is Leucine-rich repeat and fibronectin type-III domain-containing protein 2 (788 aa).

An N-terminal signal peptide occupies residues 1-20 (METLLGGLLAFGMAFAVVDA). The region spanning 21–52 (CPKYCVCQNLSESLGTLCPSKGLLFVPPDIDR) is the LRRNT domain. The Extracellular portion of the chain corresponds to 21 to 534 (CPKYCVCQNL…MHSQILGGTM (514 aa)). N-linked (GlcNAc...) asparagine glycans are attached at residues Asn29 and Asn74. LRR repeat units lie at residues 53-74 (RTVE…DFAN), 77-98 (GLVD…SFLD), 101-122 (SLRS…TLRG), 125-146 (NLQH…AFED), 150-171 (TLED…SVRR), 174-195 (NLHQ…TFAD), and 198-219 (KLAR…PIFA). The region spanning 242-288 (NPLHCNCELLWLRRLERDDDLKTCGSPGGLKGRYFWHIREEEFVCEP) is the LRRCT domain. The Ig-like domain occupies 289 to 375 (PLITQHTHKL…GEATATVEVS (87 aa)). Cys310 and Cys359 form a disulfide bridge. Asn332, Asn341, Asn384, and Asn457 each carry an N-linked (GlcNAc...) asparagine glycan. The disordered stretch occupies residues 383–423 (SNSTSRMAPPKSRLSDITGSSKTSRGGGGSGAGEPPKSTPE). One can recognise a Fibronectin type-III domain in the interval 422–518 (PERAVLVSDV…GCAQFFTKAD (97 aa)). Residues 535 to 555 (ILVIGGIIVATLLVFIVILMV) form a helical membrane-spanning segment. At 556–788 (RYKVCNHDAP…SSEWVMESTV (233 aa)) the chain is on the cytoplasmic side. The span at 620-641 (CDSSSSSSLGSGEAAGLSRGPW) shows a compositional bias: low complexity. 2 disordered regions span residues 620–655 (CDSS…PSLD) and 668–707 (SQRK…ATRA). Pro residues predominate over residues 642-651 (RLPPPAPRPK). The PDZ-binding signature appears at 785–788 (ESTV).

The protein belongs to the LRFN family. In terms of assembly, forms heteromeric complexes with LRFN1, LRFN3 and LRFN4. Can form homomeric complexes, but not across cell junctions. Can form heteromeric complexes with LRFN5. Interacts with DLG1, DLG3 and DLG4; interaction with DLG4 is mediated by the PDZ-binding domain. Also interacts with DLG2. Interacts with 2 NMDA receptor subunits GRIN1 and GRIN2A.

The protein localises to the membrane. It is found in the synapse. The protein resides in the postsynaptic cell membrane. Functionally, promotes neurite outgrowth in hippocampal neurons. Enhances the cell surface expression of GRIN1 and GRIN2A NMDA receptor subunits. May play a role in redistributing DLG4 to the cell periphery. This chain is Leucine-rich repeat and fibronectin type-III domain-containing protein 2 (Lrfn2), found in Rattus norvegicus (Rat).